Reading from the N-terminus, the 514-residue chain is AAA-ATPase ASD, mitochondrial (514 aa).

A helical membrane pass occupies residues 7 to 24 (VWTNTGSALASLVFIYTI). An ATP-binding site is contributed by 250 to 257 (GPPGTGKS). Disordered stretches follow at residues 311 to 342 (GQRK…ENKG) and 467 to 514 (KEEA…TMKD). Composition is skewed to basic and acidic residues over residues 331–342 (KQMKKDQGENKG) and 467–502 (KEEA…KEEK).

Belongs to the AAA ATPase family. BCS1 subfamily. Requires Mg(2+) as cofactor. In terms of tissue distribution, expressed in seeds, specifically in the embryo.

The protein resides in the mitochondrion membrane. The enzyme catalyses ATP + H2O = ADP + phosphate + H(+). In terms of biological role, required to regulate morphology and anatomy during seed maturation. This Arabidopsis thaliana (Mouse-ear cress) protein is AAA-ATPase ASD, mitochondrial (AATP1).